Reading from the N-terminus, the 374-residue chain is Dual-specificity RNA methyltransferase RlmN (374 aa).

The active-site Proton acceptor is glutamate 91. The Radical SAM core domain occupies 97 to 340 (EDDRGTLCIS…TTVRKTRGDD (244 aa)). Cysteine 104 and cysteine 345 are oxidised to a cystine. The [4Fe-4S] cluster site is built by cysteine 111, cysteine 115, and cysteine 118. S-adenosyl-L-methionine contacts are provided by residues 165-166 (GE), serine 197, 219-221 (SLH), and asparagine 302. The S-methylcysteine intermediate role is filled by cysteine 345.

Belongs to the radical SAM superfamily. RlmN family. [4Fe-4S] cluster serves as cofactor.

The protein resides in the cytoplasm. It carries out the reaction adenosine(2503) in 23S rRNA + 2 reduced [2Fe-2S]-[ferredoxin] + 2 S-adenosyl-L-methionine = 2-methyladenosine(2503) in 23S rRNA + 5'-deoxyadenosine + L-methionine + 2 oxidized [2Fe-2S]-[ferredoxin] + S-adenosyl-L-homocysteine. The catalysed reaction is adenosine(37) in tRNA + 2 reduced [2Fe-2S]-[ferredoxin] + 2 S-adenosyl-L-methionine = 2-methyladenosine(37) in tRNA + 5'-deoxyadenosine + L-methionine + 2 oxidized [2Fe-2S]-[ferredoxin] + S-adenosyl-L-homocysteine. Its function is as follows. Specifically methylates position 2 of adenine 2503 in 23S rRNA and position 2 of adenine 37 in tRNAs. m2A2503 modification seems to play a crucial role in the proofreading step occurring at the peptidyl transferase center and thus would serve to optimize ribosomal fidelity. This is Dual-specificity RNA methyltransferase RlmN from Acidovorax sp. (strain JS42).